Here is a 1171-residue protein sequence, read N- to C-terminus: MSLRFVIGRAGSGKSTLCLHEVQEELKQRPRGETILYLVPEQMTFQTQQALIGSEDVRGSIRAQVFSFSRLAWKVLQEVGGASRLHIDEAGVHMLLRKIVESRKDGLSVFQKAAEQNGFFEHLGSMIAEFKRYNVTPSNVYEMWQQLDAHSSSAEQKLLANKVYDLQLLYDDFERALIGKYLDSEDYLQLLVEKLPQSEYVKGAEIYIDGFHSFSPQELEIVRQLMICGARVTITLTLDEKTLAQPVNELDLFYETTLTYEKIKQVAREEKIEIEKTIPLMEQPRFHSPALAHLEAHYEARPNEKFNGEASVTIHTAANLRAEVEGVAREIRRLVADEDYRYRDIAVLLRNGESYYDVMRTLFTDYNIPHFIDEKRPMSHHPLVECIRSALEIISGNWRYDAVFRCVKTELLYPLDVRKETMREEMDEFENYCLAYGVQGKRWTSEDPWMYRRYRSLDDTNGMITDSEREMEEKINRLRDVVRTPVIRMQKRLKRAGTVMQMCEAVYLFLEELDVPKKLEALRIRAEESGDFLFATDHEQVWEEVMSLLDTFVEMLGEEKMSLSMFTDVMSTGLEALQFANIPPSLDQVLIANIDRSRLSNVKATFVIGVNEGVIPAAPMDEGMLSDEERDVLSAAGIELAPTTRQTLLEEQFVMYQMVTRATEKLYISCPLADEEGKTLLASSFIKKIKRMFPDVKDTFITNDVNDLSRSEQISYVATPEVTLSYVMQQLQTWKRYGFEGNLDFWWDVYNFYVTSDEWKQKSSRVLSSLFYRNRAQKLSTAVSRDLYGDKIKGSVSRMELFNRCAYAHFAQHGLSLRERDIFKLDAPDIGELFHAALKRIADRLLRENRTWADLSIKECEHLSAVVIEEIAPLLQRQILLSSNRHFYLKQKLQQIIFRTSIILREHAKSSGFVPVDLEVPFGMGGTGSLPPMEFSLPNGVKMEVVGRIDRVDKAEDENGTFLRIIDYKSSSKALDLTEVYYGLALQMLTYLDVVTSNAHTWMKKGGTASPAGVLYFHIHNPIVEVKGDASEAEIEKEILKKFKMKGLVLGDADVVRLMDNKLSTGSSDIISAGLKKDGSFSARSSIASEQEFNVLQKYVHHTFENIGKDITEGVIDIAPYKKGNKAACTFCNFKSVCQFDESLEDNQFRTLKDMKDSEAMEKIREEVGGE.

The region spanning 1–390 is the UvrD-like helicase ATP-binding domain; it reads MSLRFVIGRA…HPLVECIRSA (390 aa). 8–15 provides a ligand contact to ATP; it reads GRAGSGKS. A UvrD-like helicase C-terminal domain is found at 281-587; that stretch reads MEQPRFHSPA…QFANIPPSLD (307 aa). Residues C805, C1129, C1132, and C1138 each coordinate [4Fe-4S] cluster.

It belongs to the helicase family. AddB/RexB type 1 subfamily. In terms of assembly, heterodimer of AddA and AddB. Requires Mg(2+) as cofactor. The cofactor is [4Fe-4S] cluster.

Its function is as follows. The heterodimer acts as both an ATP-dependent DNA helicase and an ATP-dependent, dual-direction single-stranded exonuclease. Recognizes the chi site generating a DNA molecule suitable for the initiation of homologous recombination. The AddB subunit has 5' -&gt; 3' nuclease activity but not helicase activity. This chain is ATP-dependent helicase/deoxyribonuclease subunit B, found in Bacillus cereus (strain ATCC 10987 / NRS 248).